The sequence spans 28 residues: Humanin-like 4 (28 aa).

This sequence belongs to the humanin family. As to expression, highly expressed in testis. Also expressed in kidney, heart, skeletal muscles and brain.

The protein resides in the secreted. It localises to the cytoplasm. In terms of biological role, plays a role as a neuroprotective and antiapoptotic factor. This chain is Humanin-like 4, found in Homo sapiens (Human).